The chain runs to 67 residues: Bowman-Birk type proteinase inhibitor 1 (67 aa).

Disulfide bonds link cysteine 5/cysteine 59, cysteine 6/cysteine 21, cysteine 9/cysteine 55, cysteine 11/cysteine 19, cysteine 29/cysteine 36, cysteine 33/cysteine 48, and cysteine 38/cysteine 46.

Belongs to the Bowman-Birk serine protease inhibitor family. Monomer. Although dimerization may occur in solution. As to expression, seed.

Functionally, inhibits trypsin but not chymotrypsin. The inhibitor consists of 2 domains and has 2 sites of interaction with trypsin. The sequence is that of Bowman-Birk type proteinase inhibitor 1 from Dioclea glabra.